A 97-amino-acid polypeptide reads, in one-letter code: Aspartyl/glutamyl-tRNA(Asn/Gln) amidotransferase subunit C (97 aa).

Belongs to the GatC family. Heterotrimer of A, B and C subunits.

It catalyses the reaction L-glutamyl-tRNA(Gln) + L-glutamine + ATP + H2O = L-glutaminyl-tRNA(Gln) + L-glutamate + ADP + phosphate + H(+). It carries out the reaction L-aspartyl-tRNA(Asn) + L-glutamine + ATP + H2O = L-asparaginyl-tRNA(Asn) + L-glutamate + ADP + phosphate + 2 H(+). Its function is as follows. Allows the formation of correctly charged Asn-tRNA(Asn) or Gln-tRNA(Gln) through the transamidation of misacylated Asp-tRNA(Asn) or Glu-tRNA(Gln) in organisms which lack either or both of asparaginyl-tRNA or glutaminyl-tRNA synthetases. The reaction takes place in the presence of glutamine and ATP through an activated phospho-Asp-tRNA(Asn) or phospho-Glu-tRNA(Gln). This Prochlorococcus marinus (strain MIT 9313) protein is Aspartyl/glutamyl-tRNA(Asn/Gln) amidotransferase subunit C.